A 196-amino-acid chain; its full sequence is Protein LSM12 homolog A (196 aa).

The region spanning 3–73 is the Sm domain; sequence APGPGEYFSV…VSEVDIINDR (71 aa). The AD domain maps to 81–175; sequence ASLNISKLAN…IVEKHFRDVE (95 aa). Residues 174-196 form a disordered region; the sequence is VESQKTMQRSQAQQTQKDSSLSS. Over residues 177–196 the composition is skewed to polar residues; the sequence is QKTMQRSQAQQTQKDSSLSS.

It belongs to the LSM12 family.

In Danio rerio (Zebrafish), this protein is Protein LSM12 homolog A (lsm12a).